The following is a 477-amino-acid chain: Otolin-1 (477 aa).

The N-terminal stretch at 1–23 (MWMFSWLCAILIILAIAGMNTIA) is a signal peptide. 2 disordered regions span residues 28 to 55 (HTKF…PEEE) and 111 to 337 (QKGE…KGEL). The segment covering 33-42 (KKSEEREMPK) has biased composition (basic and acidic residues). One can recognise a Collagen-like 1 domain in the interval 116 to 175 (GETGQPGPKGEAGNLGIPGPPGVVGPQGPRGYKGEKGLKGERGDQGVPGYPGKPGAQGEP). Residues P133 and P136 each carry the hydroxyproline modification. The segment covering 147–159 (YKGEKGLKGERGD) has biased composition (basic and acidic residues). A hydroxyproline mark is found at P163, P166, and P169. K178 carries the 5-hydroxylysine modification. O-linked (Gal...) hydroxylysine glycosylation occurs at K178. Positions 182 to 191 (GNIGLGGVKG) are enriched in gly residues. N-linked (GlcNAc...) asparagine glycosylation occurs at N202. Collagen-like domains are found at residues 209–268 (GDQG…KGSK) and 278–337 (GRNG…KGEL). P223 carries the post-translational modification Hydroxyproline. 2 stretches are compositionally biased toward basic and acidic residues: residues 226 to 240 (KGEK…EMGD) and 247 to 277 (SGER…EGKS). P283 and P301 each carry hydroxyproline. A compositionally biased stretch (low complexity) spans 298 to 310 (LGPPGLLGPTGPK). K310 is subject to 5-hydroxylysine. A glycan (O-linked (Gal...) hydroxylysine) is linked at K310. Residues 338 to 473 (ARVPRSAFSA…GFLLYPEETS (136 aa)) form the C1q domain. N-linked (GlcNAc...) asparagine glycosylation is present at N381.

Belongs to the OTOL1 family. As to quaternary structure, homooligomer; disulfide-linked; probably forms homotrimers. Interacts with OC90. Interacts with CBLN1.

The protein resides in the secreted. Its subcellular location is the extracellular space. The protein localises to the extracellular matrix. Functionally, collagen-like protein specifically expressed in the inner ear, which provides an organic scaffold for otoconia, a calcium carbonate structure in the saccule and utricle of the ear. Acts as a scaffold for biomineralization: sequesters calcium and forms interconnecting fibrils between otoconia that are incorporated into the calcium crystal structure. Together with OC90, modulates calcite crystal morphology and growth kinetics. The chain is Otolin-1 from Homo sapiens (Human).